We begin with the raw amino-acid sequence, 152 residues long: Small heat shock protein HspA (152 aa).

In terms of domain architecture, sHSP spans 29–139 (TAGEANYPPC…KPRRIPIDNL (111 aa)).

The protein belongs to the small heat shock protein (HSP20) family.

In Bradyrhizobium diazoefficiens (strain JCM 10833 / BCRC 13528 / IAM 13628 / NBRC 14792 / USDA 110), this protein is Small heat shock protein HspA (hspA).